Reading from the N-terminus, the 158-residue chain is UPF0303 protein SCO2848 (158 aa).

It belongs to the UPF0303 family.

The sequence is that of UPF0303 protein SCO2848 from Streptomyces coelicolor (strain ATCC BAA-471 / A3(2) / M145).